A 377-amino-acid chain; its full sequence is uncharacterized protein (377 aa).

Residues 21–43 (YFISFSALFLIAYMFVAAVPLGA) traverse the membrane as a helical segment.

It is found in the membrane. This is an uncharacterized protein from Treponema pallidum (strain Nichols).